The sequence spans 193 residues: Early light-induced protein 2, chloroplastic (193 aa).

Residues 1-43 (MATASFNMQSVFAAPSGVLTTRNIRNTNQLFFKRIAPVGVRCM) constitute a chloroplast transit peptide. The interval 46-80 (GDPIKEDPSVPSTSTSATPPQMPQSPPPPVSKPKV) is disordered. Low complexity predominate over residues 54-64 (SVPSTSTSATP). Pro residues predominate over residues 65–76 (PQMPQSPPPPVS). The next 3 helical transmembrane spans lie at 102-122 (LAMVGFVAAIAMELSKGENVF), 129-149 (GVGWFLGTTALLTLASMVPLF), and 173-193 (FAMLGLVALAFTEYVTGGTLV).

It belongs to the ELIP/psbS family.

It localises to the plastid. The protein resides in the chloroplast thylakoid membrane. In terms of biological role, probably involved in the integration of pigments into the mature light-harvesting pigment-protein complexes. Light-harvesting chlorophyll (LHC) a/b-binding protein required to ensure a high rate of chlorophyll accumulation during deetiolation in continuous high light. Involved in seed germination. May fulfill a photoprotective functions. Prevents excess accumulation of free chlorophyll by inhibiting the entire chlorophyll biosynthesis pathway (e.g. 5-aminolevulinate synthesis and Mg-protoporphyrin IX chelatase activity), and hence prevent photooxidative stress. This is Early light-induced protein 2, chloroplastic from Arabidopsis thaliana (Mouse-ear cress).